The primary structure comprises 154 residues: Large ribosomal subunit protein uL13 (154 aa).

Belongs to the universal ribosomal protein uL13 family. As to quaternary structure, part of the 50S ribosomal subunit.

In terms of biological role, this protein is one of the early assembly proteins of the 50S ribosomal subunit, although it is not seen to bind rRNA by itself. It is important during the early stages of 50S assembly. The protein is Large ribosomal subunit protein uL13 of Brucella anthropi (strain ATCC 49188 / DSM 6882 / CCUG 24695 / JCM 21032 / LMG 3331 / NBRC 15819 / NCTC 12168 / Alc 37) (Ochrobactrum anthropi).